The sequence spans 357 residues: Peptide chain release factor 1 (357 aa).

Glutamine 233 bears the N5-methylglutamine mark.

It belongs to the prokaryotic/mitochondrial release factor family. Post-translationally, methylated by PrmC. Methylation increases the termination efficiency of RF1.

It is found in the cytoplasm. In terms of biological role, peptide chain release factor 1 directs the termination of translation in response to the peptide chain termination codons UAG and UAA. The protein is Peptide chain release factor 1 of Syntrophus aciditrophicus (strain SB).